The chain runs to 616 residues: Electron transfer flavoprotein-ubiquinone oxidoreductase, mitochondrial (616 aa).

A mitochondrion-targeting transit peptide spans 1-32 (MLVRLTKLSCPAYHWFHALKIKKCLPLCAPRC). 70–84 (VVIVGAGPAGLSAAI) contributes to the FAD binding site. Position 95 is an N6-acetyllysine (Lys95). Residues 108 to 129 (IGAHTLSGACLDPAAFKELFPD) lie within the membrane without spanning it. N6-acetyllysine occurs at positions 131 and 222. A ubiquinone is bound by residues Gly304 and Gly305. 2 positions are modified to N6-acetyllysine: Lys356 and Lys415. An intramembrane segment occupies 427–446 (TGLHVTEYEDNLKQSWVWKE). At Ser550 the chain carries Phosphoserine. Residues Cys560, Cys585, Cys588, and Cys591 each coordinate [4Fe-4S] cluster. Positions 576 to 605 (FRLQINAQNCVHCKTCDIKDPSQNINWVVP) constitute a 4Fe-4S ferredoxin-type domain.

Belongs to the ETF-QO/FixC family. As to quaternary structure, monomer. It depends on [4Fe-4S] cluster as a cofactor. The cofactor is FAD. Post-translationally, acetylation of Lys-95 and Lys-222 is observed in liver mitochondria from fasted mice but not from fed mice.

It is found in the mitochondrion inner membrane. The enzyme catalyses a ubiquinone + reduced [electron-transfer flavoprotein] = a ubiquinol + oxidized [electron-transfer flavoprotein] + H(+). In terms of biological role, accepts electrons from ETF and reduces ubiquinone. This Mus musculus (Mouse) protein is Electron transfer flavoprotein-ubiquinone oxidoreductase, mitochondrial (Etfdh).